A 208-amino-acid polypeptide reads, in one-letter code: Cell death-inducing p53-target protein 1 (208 aa).

2 stretches are compositionally biased toward pro residues: residues 1–13 (MSSE…PGGP) and 36–67 (MQPP…PGFI). The interval 1–71 (MSSEPPPPYP…PQPGFIPPHM (71 aa)) is disordered. The LITAF domain occupies 122–206 (ATTVTVLQGE…CKAYIYTYKR (85 aa)). Residues cysteine 142 and cysteine 145 each coordinate Zn(2+). The segment at 164–184 (LGFFCCFMGCDLGCCLIPCLI) is membrane-binding amphipathic helix. Residues cysteine 194 and cysteine 197 each coordinate Zn(2+).

It belongs to the CDIP1/LITAF family. Highly expressed in brain. Expressed at lower level in heart, skeletal muscle, kidney, pancreas and liver. Weakly or not expressed in placenta and lung.

It is found in the late endosome membrane. The protein localises to the lysosome membrane. Acts as an important p53/TP53-apoptotic effector. Regulates TNF-alpha-mediated apoptosis in a p53/TP53-dependent manner. The chain is Cell death-inducing p53-target protein 1 (CDIP1) from Homo sapiens (Human).